The sequence spans 733 residues: FYVE, RhoGEF and PH domain-containing protein 3 (733 aa).

Composition is skewed to polar residues over residues 1-11 (MELGRSSSTPQ), 47-60 (HSSS…STRE), and 106-117 (ETASDSRVPQDN). The interval 1–134 (MELGRSSSTP…GVGEEPDPKV (134 aa)) is disordered. The span at 118–129 (PQEEEDSGVGEE) shows a compositional bias: acidic residues. Serine 124 is subject to Phosphoserine. The DH domain occupies 153 to 337 (KLLHIAQELL…STAADHSNAA (185 aa)). Residues 366 to 465 (ELIKEGSIQK…WIQVIQATVE (100 aa)) enclose the PH 1 domain. The segment at 481–535 (CSQDEEPTLSPDQPVMSTSSVEPAGVADSNGGTPGIESRKSSSKTRRDKEKPGCK) is disordered. Over residues 517 to 533 (ESRKSSSKTRRDKEKPG) the composition is skewed to basic and acidic residues. The FYVE-type zinc finger occupies 528–584 (DKEKPGCKSCGETFNSITKRRYRCKLCGEVICRKCSEFKAENSKQSRVCRECFLEEP). Residues cysteine 534, cysteine 537, cysteine 551, cysteine 554, cysteine 559, cysteine 562, cysteine 576, and cysteine 579 each coordinate Zn(2+). Disordered regions lie at residues 586–612 (VPPS…DPRP) and 712–733 (GDTA…TDTP). The PH 2 domain maps to 612–711 (PSLLCGTLNL…WLKALGTAVH (100 aa)). Threonine 732 carries the post-translational modification Phosphothreonine.

As to expression, detected in adult brain, spleen, lung and skeletal muscle. Detected in embryos from 7 dpc to 17 dpc.

It is found in the cytoplasm. It localises to the cytoskeleton. Its function is as follows. Promotes the formation of filopodia. May activate CDC42, a member of the Ras-like family of Rho- and Rac proteins, by exchanging bound GDP for free GTP. Plays a role in regulating the actin cytoskeleton and cell shape. The sequence is that of FYVE, RhoGEF and PH domain-containing protein 3 (Fgd3) from Mus musculus (Mouse).